We begin with the raw amino-acid sequence, 1055 residues long: Protein SUPPRESSOR OF QUENCHING 1, chloroplastic (1055 aa).

A chloroplast-targeting transit peptide spans 1–56 (MALKLTSPPSVFSQSRRLSSSSLIPIRSKSTFTGFRSRTGVYLSKTTALQSSTKLS). At valine 57 the chain carries N-acetylvaline. Topologically, residues 59–327 (AESPAATIAT…FQGSRRDILR (269 aa)) are stromal. Aspartate 80 functions as the Nucleophile in the catalytic mechanism. Positions 80 and 82 each coordinate Mg(2+). A substrate-binding site is contributed by aspartate 80. Aspartate 82 (proton donor) is an active-site residue. Substrate-binding positions include glutamate 89, 118–122 (TGEAK), 141–144 (AKER), and 183–189 (SSADRIK). Aspartate 242 lines the Mg(2+) pocket. Residues 328–345 (YGSLGIALSCVYFAATNW) form a helical membrane-spanning segment. Over 346–1055 (KAMQYASPKA…AGGLQLQGTR (710 aa)) the chain is Lumenal. The region spanning 359–536 (ALVGAKSPSF…LDDVVAAALT (178 aa)) is the Thioredoxin domain. A disulfide bridge links cysteine 431 with cysteine 434. 5 NHL repeats span residues 565 to 597 (PLKF…TDLE), 611 to 647 (GFQD…NHAL), 673 to 712 (GRKG…YSVL), 802 to 832 (LQHP…LDPV), and 854 to 887 (GAQL…IDLN).

It in the N-terminal section; belongs to the HAD-like hydrolase superfamily. In the C-terminal section; belongs to the thioredoxin family. Mg(2+) is required as a cofactor.

It localises to the plastid. It is found in the chloroplast thylakoid membrane. Required to maintain light harvesting efficiency, especially during nonphotochemical quenching (NPQ) recovery, via the regulation of chlorophyll excited-state lifetime probably by preventing the formation of a slowly reversible form of antenna quenching. This chain is Protein SUPPRESSOR OF QUENCHING 1, chloroplastic, found in Arabidopsis thaliana (Mouse-ear cress).